We begin with the raw amino-acid sequence, 481 residues long: Serine/threonine-protein kinase US3 (481 aa).

The interval 12-63 (GQGRRKEEAVPPETKPSRVFPHGPFYTPAEDACLDSPPPETPKPSHTTPPSE) is disordered. Residues 191 to 478 (FTIHGALTPG…AAELLCLPLF (288 aa)) enclose the Protein kinase domain. ATP-binding positions include 197–205 (LTPGSEGCV) and Lys220. Residue Asp305 is the Proton acceptor of the active site.

This sequence belongs to the protein kinase superfamily. Ser/Thr protein kinase family. As to quaternary structure, interacts with host LAT; this interaction prevents LAT activation of TRAF6. Post-translationally, phosphorylated by UL13; this phosphorylation regulates subsequent phosphorylation of UL31 and UL34 by US3. Autophosphorylated.

It localises to the host cytoplasm. The protein localises to the host nucleus. The enzyme catalyses L-seryl-[protein] + ATP = O-phospho-L-seryl-[protein] + ADP + H(+). It carries out the reaction L-threonyl-[protein] + ATP = O-phospho-L-threonyl-[protein] + ADP + H(+). Its function is as follows. Multifunctional serine/threonine kinase that plays a role in several processes including egress of virus particles from the nucleus, modulation of the actin cytoskeleton and inhibition of host immune response. Phosphorylates UL31 and UL34, two critical regulators of capsid budding from nucleus to endoplasmic reticulum, thereby facilitating virion egress. Modulates and redistributes host components of the nuclear envelope, including LMNA, emerin/EMD and the nuclear matrix protein MATR3. In turn, facilitates nuclear pore impairment and capsid release through impaired nuclear envelope. Phosphorylates envelope glycoprotein B (gB), probably to direct it to the cell surface. Promotes virus intracellular spread by restructuring host cell cytoskeleton. Blocks host apoptosis to extend cell survival and allow efficient viral replication. Promotes viral gene expression by phosphorylating host HDAC2 to reduce viral genome silencing. Strongly inhibits TCR-activated signal transduction in T-cells by reducing the ubiquitination of LAT and TRAF6, leading to a suboptimal activation of LAT. Subverts host antiviral innate immunity by inhibiting type I interferon production through hyperphosphorylation of beta-catenin/CTNNB1. In addition, phosphorylates the RNA sensor RIGI and the transcription factor IRF3 to prevent the RLR-mediated antiviral signaling pathway. Hyperphosphorylates host RELA and thereby dampens NF-kappa-B signaling. Acts as an immunoevasin partly responsible for inhibition of MR1 expression and antigen presentation in response to bacterial infection. The chain is Serine/threonine-protein kinase US3 (US3) from Human herpesvirus 1 (strain 17) (HHV-1).